Here is a 186-residue protein sequence, read N- to C-terminus: Elongation factor P (186 aa).

It belongs to the elongation factor P family.

It is found in the cytoplasm. It participates in protein biosynthesis; polypeptide chain elongation. Involved in peptide bond synthesis. Stimulates efficient translation and peptide-bond synthesis on native or reconstituted 70S ribosomes in vitro. Probably functions indirectly by altering the affinity of the ribosome for aminoacyl-tRNA, thus increasing their reactivity as acceptors for peptidyl transferase. This chain is Elongation factor P, found in Streptococcus thermophilus (strain CNRZ 1066).